We begin with the raw amino-acid sequence, 171 residues long: Glutathione peroxidase-like peroxiredoxin GPX3 (171 aa).

Residue C43 is the Cysteine sulfenic acid (-SOH) intermediate of the active site. A disulfide bond links C43 and C89.

The protein belongs to the glutathione peroxidase family. In terms of assembly, interacts with CAP1 and probably YBP1.

The catalysed reaction is a hydroperoxide + [thioredoxin]-dithiol = an alcohol + [thioredoxin]-disulfide + H2O. Involved in oxidative stress response and redox homeostasis. Functions as a sensor and transducer of hydroperoxide stress. In response to hydroperoxide stress it oxidizes (activates) the transcription activator CAP1, which is involved in transcription activation of genes of the oxidative stress response pathway. May also play a direct role in hydroperoxide scavenging. The enzyme is not required for the glutaredoxin-mediated antioxidant function. In the presence of peroxides, GPX3 is directly oxidized at Cys-43 to form a cysteine sulfenic acid (-SOH). Cys-43-SOH then forms either an intramolecular disulfide bond (Cys-43 with Cys-89) or a transient, intermolecular disulfide bond with 'Cys-446' of CAP1, which is further resolved into a CAP1 intramolecular disulfide bond ('Cys-303' with 'Cys-598'), which causes its nuclear accumulation and activation, and a reduced Cys-43 in GPX3. Required for C.albicans-mediated macrophage killing. This chain is Glutathione peroxidase-like peroxiredoxin GPX3, found in Candida albicans (strain SC5314 / ATCC MYA-2876) (Yeast).